Consider the following 476-residue polypeptide: ATP sulfurylase 2 (476 aa).

Residues 1–56 (MSLMIRSSYVSHITLFQPRNSKPSSFTNQISFLSSSNNNPFLNLVYKRNLTMQSVS) constitute a chloroplast transit peptide.

It belongs to the sulfate adenylyltransferase family. Homotetramer. In terms of tissue distribution, mostly expressed in leaves or cotyledons.

It is found in the plastid. Its subcellular location is the chloroplast. The protein resides in the cytoplasm. It carries out the reaction sulfate + ATP + H(+) = adenosine 5'-phosphosulfate + diphosphate. It participates in sulfur metabolism; hydrogen sulfide biosynthesis; sulfite from sulfate: step 1/3. The polypeptide is ATP sulfurylase 2 (APS2) (Arabidopsis thaliana (Mouse-ear cress)).